We begin with the raw amino-acid sequence, 337 residues long: Ribosomal RNA small subunit methyltransferase H (337 aa).

S-adenosyl-L-methionine is bound by residues 36-38 (GGH), Asp56, Phe82, Asp100, and Gln107. The tract at residues 317-337 (RRSGRIPNPQSPIPASQGDAR) is disordered.

Belongs to the methyltransferase superfamily. RsmH family.

It is found in the cytoplasm. It carries out the reaction cytidine(1402) in 16S rRNA + S-adenosyl-L-methionine = N(4)-methylcytidine(1402) in 16S rRNA + S-adenosyl-L-homocysteine + H(+). In terms of biological role, specifically methylates the N4 position of cytidine in position 1402 (C1402) of 16S rRNA. This chain is Ribosomal RNA small subunit methyltransferase H, found in Xanthomonas oryzae pv. oryzae (strain KACC10331 / KXO85).